Here is a 566-residue protein sequence, read N- to C-terminus: Membrane protein insertase YidC (566 aa).

The next 5 membrane-spanning stretches (helical) occupy residues 3 to 23, 346 to 366, 369 to 389, 436 to 456, and 509 to 529; these read IKRI…FNAW, GWLW…HAVV, WGWS…WFSA, GGCL…YVII, and MWIL…GLVL.

This sequence belongs to the OXA1/ALB3/YidC family. Type 1 subfamily. Interacts with the Sec translocase complex via SecD. Specifically interacts with transmembrane segments of nascent integral membrane proteins during membrane integration.

It is found in the cell inner membrane. In terms of biological role, required for the insertion and/or proper folding and/or complex formation of integral membrane proteins into the membrane. Involved in integration of membrane proteins that insert both dependently and independently of the Sec translocase complex, as well as at least some lipoproteins. Aids folding of multispanning membrane proteins. The protein is Membrane protein insertase YidC of Coxiella burnetii (strain Dugway 5J108-111).